Consider the following 261-residue polypeptide: Cytochrome c oxidase subunit 3 (261 aa).

At 1–15 the chain is on the mitochondrial matrix side; sequence MTHQTHAYHMVNPSP. A helical membrane pass occupies residues 16–34; it reads WPLTGALSALLLTSGLMMW. Residues 35–40 lie on the Mitochondrial intermembrane side of the membrane; sequence FHFNNP. The helical transmembrane segment at 41 to 66 threads the bilayer; it reads TLLVLGLLTNLISSYQWWRDIVREGT. The Mitochondrial matrix segment spans residues 67 to 72; it reads YQGHHT. Residues 73–105 traverse the membrane as a helical segment; that stretch reads KVVQKGLRYGMVLFIISEVFFFLGFFWAFYHSS. At 106–128 the chain is on the mitochondrial intermembrane side; that stretch reads LAPTPELGGCWPPTGISPLNPLE. A helical transmembrane segment spans residues 129 to 152; that stretch reads VPLLNTSILLASGVSITWSHHSLM. Residues 153–155 lie on the Mitochondrial matrix side of the membrane; sequence EGN. The helical transmembrane segment at 156–183 threads the bilayer; sequence RKQMIQALMITIALGLYFTALQAMEYYE. Over 184-190 the chain is Mitochondrial intermembrane; it reads SSFTISD. Residues 191–223 form a helical membrane-spanning segment; that stretch reads GVYGSTFFVATGFHGLHVIIGTTFLITCLLRQL. Residues 224-232 lie on the Mitochondrial matrix side of the membrane; it reads LYHFTSNHH. The chain crosses the membrane as a helical span at residues 233 to 256; sequence FGFEAAAWYWHFVDVVWLFLYVSI. Residues 257 to 261 are Mitochondrial intermembrane-facing; it reads YWWGS.

Belongs to the cytochrome c oxidase subunit 3 family. In terms of assembly, component of the cytochrome c oxidase (complex IV, CIV), a multisubunit enzyme composed of 14 subunits. The complex is composed of a catalytic core of 3 subunits MT-CO1, MT-CO2 and MT-CO3, encoded in the mitochondrial DNA, and 11 supernumerary subunits COX4I, COX5A, COX5B, COX6A, COX6B, COX6C, COX7A, COX7B, COX7C, COX8 and NDUFA4, which are encoded in the nuclear genome. The complex exists as a monomer or a dimer and forms supercomplexes (SCs) in the inner mitochondrial membrane with NADH-ubiquinone oxidoreductase (complex I, CI) and ubiquinol-cytochrome c oxidoreductase (cytochrome b-c1 complex, complex III, CIII), resulting in different assemblies (supercomplex SCI(1)III(2)IV(1) and megacomplex MCI(2)III(2)IV(2)).

Its subcellular location is the mitochondrion inner membrane. It carries out the reaction 4 Fe(II)-[cytochrome c] + O2 + 8 H(+)(in) = 4 Fe(III)-[cytochrome c] + 2 H2O + 4 H(+)(out). Its function is as follows. Component of the cytochrome c oxidase, the last enzyme in the mitochondrial electron transport chain which drives oxidative phosphorylation. The respiratory chain contains 3 multisubunit complexes succinate dehydrogenase (complex II, CII), ubiquinol-cytochrome c oxidoreductase (cytochrome b-c1 complex, complex III, CIII) and cytochrome c oxidase (complex IV, CIV), that cooperate to transfer electrons derived from NADH and succinate to molecular oxygen, creating an electrochemical gradient over the inner membrane that drives transmembrane transport and the ATP synthase. Cytochrome c oxidase is the component of the respiratory chain that catalyzes the reduction of oxygen to water. Electrons originating from reduced cytochrome c in the intermembrane space (IMS) are transferred via the dinuclear copper A center (CU(A)) of subunit 2 and heme A of subunit 1 to the active site in subunit 1, a binuclear center (BNC) formed by heme A3 and copper B (CU(B)). The BNC reduces molecular oxygen to 2 water molecules using 4 electrons from cytochrome c in the IMS and 4 protons from the mitochondrial matrix. The sequence is that of Cytochrome c oxidase subunit 3 (MT-CO3) from Tachyglossus aculeatus aculeatus (Southeast Australian short-beaked echidna).